The primary structure comprises 427 residues: Serine--tRNA ligase (427 aa).

231–233 (TAE) is an L-serine binding site. Position 262-264 (262-264 (RSE)) interacts with ATP. L-serine is bound at residue Glu-285. 349-352 (EISS) contacts ATP. Ser-385 contributes to the L-serine binding site.

This sequence belongs to the class-II aminoacyl-tRNA synthetase family. Type-1 seryl-tRNA synthetase subfamily. In terms of assembly, homodimer. The tRNA molecule binds across the dimer.

Its subcellular location is the cytoplasm. The enzyme catalyses tRNA(Ser) + L-serine + ATP = L-seryl-tRNA(Ser) + AMP + diphosphate + H(+). It catalyses the reaction tRNA(Sec) + L-serine + ATP = L-seryl-tRNA(Sec) + AMP + diphosphate + H(+). It functions in the pathway aminoacyl-tRNA biosynthesis; selenocysteinyl-tRNA(Sec) biosynthesis; L-seryl-tRNA(Sec) from L-serine and tRNA(Sec): step 1/1. Functionally, catalyzes the attachment of serine to tRNA(Ser). Is also able to aminoacylate tRNA(Sec) with serine, to form the misacylated tRNA L-seryl-tRNA(Sec), which will be further converted into selenocysteinyl-tRNA(Sec). This chain is Serine--tRNA ligase, found in Listeria monocytogenes serotype 4b (strain CLIP80459).